A 206-amino-acid polypeptide reads, in one-letter code: MKLDIKTLDGAGAGSVELNEEIFGLEPRADLLQRMVRWQLAKRRAGTHAVQNRSDVNRTRKKLYKQKGTGNARHGAASAPQFRGGGRAFGPVVRDHSHDLPKKVRALALRHALSSKAKASTLIVVDDIKIEDHKTKGLIERFGKMGLSNALIIGGAEVDVNFGRAARAIPQIDVLPVQGINVYDILRRDTLVLTKAAVDALEERFK.

The protein belongs to the universal ribosomal protein uL4 family. In terms of assembly, part of the 50S ribosomal subunit.

Functionally, one of the primary rRNA binding proteins, this protein initially binds near the 5'-end of the 23S rRNA. It is important during the early stages of 50S assembly. It makes multiple contacts with different domains of the 23S rRNA in the assembled 50S subunit and ribosome. Forms part of the polypeptide exit tunnel. This chain is Large ribosomal subunit protein uL4, found in Methylobacterium radiotolerans (strain ATCC 27329 / DSM 1819 / JCM 2831 / NBRC 15690 / NCIMB 10815 / 0-1).